The primary structure comprises 203 residues: Ribosomal RNA large subunit methyltransferase E (203 aa).

G60, W62, D79, D95, and D119 together coordinate S-adenosyl-L-methionine. K159 functions as the Proton acceptor in the catalytic mechanism.

It belongs to the class I-like SAM-binding methyltransferase superfamily. RNA methyltransferase RlmE family.

Its subcellular location is the cytoplasm. The enzyme catalyses uridine(2552) in 23S rRNA + S-adenosyl-L-methionine = 2'-O-methyluridine(2552) in 23S rRNA + S-adenosyl-L-homocysteine + H(+). Functionally, specifically methylates the uridine in position 2552 of 23S rRNA at the 2'-O position of the ribose in the fully assembled 50S ribosomal subunit. This is Ribosomal RNA large subunit methyltransferase E from Pelagibacter ubique (strain HTCC1062).